Reading from the N-terminus, the 805-residue chain is Leucine--tRNA ligase (805 aa).

Positions 40-51 (PYPSGAGLHVGH) match the 'HIGH' region motif. The 'KMSKS' region signature appears at 576-580 (KMSKS). An ATP-binding site is contributed by Lys-579.

This sequence belongs to the class-I aminoacyl-tRNA synthetase family.

The protein resides in the cytoplasm. The catalysed reaction is tRNA(Leu) + L-leucine + ATP = L-leucyl-tRNA(Leu) + AMP + diphosphate. The protein is Leucine--tRNA ligase of Geobacillus thermodenitrificans (strain NG80-2).